Here is a 250-residue protein sequence, read N- to C-terminus: Snake venom serine protease pictobin (250 aa).

Residues 1–11 form the signal peptide; that stretch reads ANLLILQVSYA. Positions 12–17 are excised as a propeptide; that stretch reads QKSSEL. In terms of domain architecture, Peptidase S1 spans 18–241; sequence VIGGDECNIN…HLHWILSIIA (224 aa). Cystine bridges form between C24–C155, C42–C58, C134–C202, C166–C181, and C192–C217. H57 functions as the Charge relay system in the catalytic mechanism. N-linked (GlcNAc...) asparagine glycosylation is found at N71 and N95. D102 (charge relay system) is an active-site residue. Residues N146 and N162 are each glycosylated (N-linked (GlcNAc...) asparagine). The active-site Charge relay system is S196. An N-linked (GlcNAc...) asparagine glycan is attached at N243.

This sequence belongs to the peptidase S1 family. Snake venom subfamily. In terms of assembly, monomer. Expressed by the venom gland.

The protein localises to the secreted. Functionally, snake venom serine protease that may impair the hemostatic system of the prey. The chain is Snake venom serine protease pictobin from Bothrops pictus (Desert lancehead).